Consider the following 121-residue polypeptide: MDELNIEIVAVDRKIWSGKGTFLFTRTTAGEIGILPRHIPMVAQLVDDNMVRIEREGEKDLRVAVDGGFLSVTEERVSILAESAEFDSEIDENAAKQDAESDDPRIAARGRARLRAVGAID.

This sequence belongs to the ATPase epsilon chain family. In terms of assembly, F-type ATPases have 2 components, CF(1) - the catalytic core - and CF(0) - the membrane proton channel. CF(1) has five subunits: alpha(3), beta(3), gamma(1), delta(1), epsilon(1). CF(0) has three main subunits: a, b and c.

Its subcellular location is the cell membrane. Produces ATP from ADP in the presence of a proton gradient across the membrane. The chain is ATP synthase epsilon chain from Mycobacterium leprae (strain Br4923).